We begin with the raw amino-acid sequence, 115 residues long: NAD(P)H-quinone oxidoreductase subunit M (115 aa).

It belongs to the complex I NdhM subunit family. NDH-1 can be composed of about 15 different subunits; different subcomplexes with different compositions have been identified which probably have different functions.

The protein localises to the cellular thylakoid membrane. It carries out the reaction a plastoquinone + NADH + (n+1) H(+)(in) = a plastoquinol + NAD(+) + n H(+)(out). The enzyme catalyses a plastoquinone + NADPH + (n+1) H(+)(in) = a plastoquinol + NADP(+) + n H(+)(out). Functionally, NDH-1 shuttles electrons from an unknown electron donor, via FMN and iron-sulfur (Fe-S) centers, to quinones in the respiratory and/or the photosynthetic chain. The immediate electron acceptor for the enzyme in this species is believed to be plastoquinone. Couples the redox reaction to proton translocation, and thus conserves the redox energy in a proton gradient. Cyanobacterial NDH-1 also plays a role in inorganic carbon-concentration. The polypeptide is NAD(P)H-quinone oxidoreductase subunit M (Synechococcus sp. (strain CC9605)).